A 125-amino-acid polypeptide reads, in one-letter code: Aspartate 1-decarboxylase 2 (125 aa).

The active-site Schiff-base intermediate with substrate; via pyruvic acid is Ser-25. Ser-25 bears the Pyruvic acid (Ser) mark. Thr-57 contacts substrate. Catalysis depends on Tyr-58, which acts as the Proton donor. 73–75 contributes to the substrate binding site; it reads GAA.

This sequence belongs to the PanD family. Heterooctamer of four alpha and four beta subunits. Pyruvate is required as a cofactor. Post-translationally, is synthesized initially as an inactive proenzyme, which is activated by self-cleavage at a specific serine bond to produce a beta-subunit with a hydroxyl group at its C-terminus and an alpha-subunit with a pyruvoyl group at its N-terminus.

The protein localises to the cytoplasm. It carries out the reaction L-aspartate + H(+) = beta-alanine + CO2. It functions in the pathway cofactor biosynthesis; (R)-pantothenate biosynthesis; beta-alanine from L-aspartate: step 1/1. Catalyzes the pyruvoyl-dependent decarboxylation of aspartate to produce beta-alanine. The sequence is that of Aspartate 1-decarboxylase 2 from Gloeobacter violaceus (strain ATCC 29082 / PCC 7421).